A 553-amino-acid polypeptide reads, in one-letter code: Coiled-coil domain-containing protein 22 homolog (553 aa).

Coiled-coil stretches lie at residues 261-404 and 498-553; these read LEEL…TATQ and NVTK…VAKA.

The protein belongs to the CCDC22 family.

The chain is Coiled-coil domain-containing protein 22 homolog from Drosophila pseudoobscura pseudoobscura (Fruit fly).